The chain runs to 356 residues: Nicotinate-nucleotide--dimethylbenzimidazole phosphoribosyltransferase (356 aa).

Glu317 serves as the catalytic Proton acceptor.

Belongs to the CobT family. Homodimer.

It catalyses the reaction 5,6-dimethylbenzimidazole + nicotinate beta-D-ribonucleotide = alpha-ribazole 5'-phosphate + nicotinate + H(+). Its pathway is nucleoside biosynthesis; alpha-ribazole biosynthesis; alpha-ribazole from 5,6-dimethylbenzimidazole: step 1/2. Catalyzes the synthesis of alpha-ribazole-5'-phosphate from nicotinate mononucleotide (NAMN) and 5,6-dimethylbenzimidazole (DMB). The protein is Nicotinate-nucleotide--dimethylbenzimidazole phosphoribosyltransferase of Salmonella gallinarum (strain 287/91 / NCTC 13346).